The sequence spans 440 residues: MFLAQEIIRKKRDGHALSDEEIRFFINGIRDNTISEGQIAALAMTIFFHDMTMPERVSLTMAMRDSGTVLDWKSLNLNGPIVDKHSTGGVGDVTSLMLGPMVAACGGYVPMISGRGLGHTGGTLDKLEAIPGFDIFPDDNRFREIIQDVGVAIIGQTSSLAPADKRFYATRDITATVDSIPLITGSILAKKLAEGLDALVMDVKVGSGAFMPTYELSEALAEAIVGVANGAGVRTTALLTDMNQVLASSAGNAVEVREAVQFLTGEYRNPRLFDVTMALCVEMLISGQLAKDDAEARTKLQAVLDNGKAAEVFGRMVAAQKGPSDFVENYDKYLPTAMLSKAVYADTEGFISAMDTRALGMAVVSMGGGRRQASDTIDYSVGFTDMARLGDSIDGQRPLAVIHAKDEASWQEAAKAVKAAIILDDKAPVSTPSVYRRITE.

This sequence belongs to the thymidine/pyrimidine-nucleoside phosphorylase family. Homodimer.

It carries out the reaction thymidine + phosphate = 2-deoxy-alpha-D-ribose 1-phosphate + thymine. It functions in the pathway pyrimidine metabolism; dTMP biosynthesis via salvage pathway; dTMP from thymine: step 1/2. Functionally, the enzymes which catalyze the reversible phosphorolysis of pyrimidine nucleosides are involved in the degradation of these compounds and in their utilization as carbon and energy sources, or in the rescue of pyrimidine bases for nucleotide synthesis. This Salmonella choleraesuis (strain SC-B67) protein is Thymidine phosphorylase.